The chain runs to 124 residues: Small ribosomal subunit protein uS12 (124 aa).

3-methylthioaspartic acid is present on Asp89. The tract at residues 103-124 is disordered; that stretch reads DTAGVKDRRQGRSKYGAKRPKD. The span at 113–124 shows a compositional bias: basic residues; sequence GRSKYGAKRPKD.

The protein belongs to the universal ribosomal protein uS12 family. In terms of assembly, part of the 30S ribosomal subunit. Contacts proteins S8 and S17. May interact with IF1 in the 30S initiation complex.

With S4 and S5 plays an important role in translational accuracy. In terms of biological role, interacts with and stabilizes bases of the 16S rRNA that are involved in tRNA selection in the A site and with the mRNA backbone. Located at the interface of the 30S and 50S subunits, it traverses the body of the 30S subunit contacting proteins on the other side and probably holding the rRNA structure together. The combined cluster of proteins S8, S12 and S17 appears to hold together the shoulder and platform of the 30S subunit. The protein is Small ribosomal subunit protein uS12 of Acaryochloris marina (strain MBIC 11017).